A 177-amino-acid polypeptide reads, in one-letter code: Large ribosomal subunit protein uL6 (177 aa).

The protein belongs to the universal ribosomal protein uL6 family. As to quaternary structure, part of the 50S ribosomal subunit.

Its function is as follows. This protein binds to the 23S rRNA, and is important in its secondary structure. It is located near the subunit interface in the base of the L7/L12 stalk, and near the tRNA binding site of the peptidyltransferase center. The polypeptide is Large ribosomal subunit protein uL6 (Methylorubrum populi (strain ATCC BAA-705 / NCIMB 13946 / BJ001) (Methylobacterium populi)).